The primary structure comprises 71 residues: MKADIHPNYEAVAVTCSCGNKFETRSTLGSTLAIDVCNLCHPFYTGKQKVLDTGGRVQRFADRFGMFGTKK.

The Zn(2+) site is built by Cys-16, Cys-18, Cys-37, and Cys-40.

It belongs to the bacterial ribosomal protein bL31 family. Type A subfamily. As to quaternary structure, part of the 50S ribosomal subunit. Zn(2+) serves as cofactor.

Binds the 23S rRNA. The protein is Large ribosomal subunit protein bL31 of Pseudomonas putida (strain W619).